Here is a 398-residue protein sequence, read N- to C-terminus: CCA-adding enzyme (398 aa).

Residues Gly-32 and Arg-35 each contribute to the ATP site. 2 residues coordinate CTP: Gly-32 and Arg-35. The Mg(2+) site is built by Asp-45 and Asp-47. Positions 119, 162, 165, 168, and 171 each coordinate ATP. CTP-binding residues include Arg-119, Asp-162, Arg-165, Arg-168, and Arg-171.

Belongs to the tRNA nucleotidyltransferase/poly(A) polymerase family. Bacterial CCA-adding enzyme type 3 subfamily. In terms of assembly, homodimer. It depends on Mg(2+) as a cofactor.

The enzyme catalyses a tRNA precursor + 2 CTP + ATP = a tRNA with a 3' CCA end + 3 diphosphate. It catalyses the reaction a tRNA with a 3' CCA end + 2 CTP + ATP = a tRNA with a 3' CCACCA end + 3 diphosphate. Functionally, catalyzes the addition and repair of the essential 3'-terminal CCA sequence in tRNAs without using a nucleic acid template. Adds these three nucleotides in the order of C, C, and A to the tRNA nucleotide-73, using CTP and ATP as substrates and producing inorganic pyrophosphate. tRNA 3'-terminal CCA addition is required both for tRNA processing and repair. Also involved in tRNA surveillance by mediating tandem CCA addition to generate a CCACCA at the 3' terminus of unstable tRNAs. While stable tRNAs receive only 3'-terminal CCA, unstable tRNAs are marked with CCACCA and rapidly degraded. The chain is CCA-adding enzyme from Lactococcus lactis subsp. lactis (strain IL1403) (Streptococcus lactis).